The primary structure comprises 649 residues: ATP-dependent DNA helicase Q1 (649 aa).

The Helicase ATP-binding domain occupies 100 to 275; it reads INVTMAGKEV…QKILCIEKCF (176 aa). 113 to 120 contacts ATP; that stretch reads MPTGGGKG. A DEVH box motif is present at residues 219–222; it reads DEVH. The region spanning 300–451 is the Helicase C-terminal domain; that stretch reads FIEDIVKLIN…EMVSYCQNIS (152 aa). Positions 453, 471, 475, and 478 each coordinate Zn(2+). Lys514 and Lys522 each carry N6-acetyllysine. Phosphoserine occurs at positions 597 and 602. Residues 597–608 show a composition bias toward polar residues; that stretch reads SFRVESSQTCHS. The interval 597–649 is disordered; sequence SFRVESSQTCHSEQGDKKMEEKNSGNFQKKAANMLQQSGSKNTGAKKRKIDDA. Over residues 609-619 the composition is skewed to basic and acidic residues; the sequence is EQGDKKMEEKN. The span at 630-639 shows a compositional bias: polar residues; it reads MLQQSGSKNT. At Ser634 the chain carries Phosphoserine. A compositionally biased stretch (basic residues) spans 640 to 649; sequence GAKKRKIDDA.

The protein belongs to the helicase family. RecQ subfamily. In terms of assembly, may form homodimers or higher order oligomers. Interacts with EXO1. Interacts with MLH1. Interacts with PARP1. Requires Mg(2+) as cofactor. Mn(2+) serves as cofactor. The cofactor is Zn(2+).

Its subcellular location is the nucleus. The catalysed reaction is Couples ATP hydrolysis with the unwinding of duplex DNA by translocating in the 3'-5' direction.. It carries out the reaction ATP + H2O = ADP + phosphate + H(+). It catalyses the reaction dATP + H2O = dADP + phosphate + H(+). Functionally, DNA helicase that plays a role in DNA damage repair and genome stability. Exhibits a magnesium- and ATP-dependent DNA-helicase activity that unwinds single- and double-stranded DNA in a 3'-5' direction. Plays a role in restoring regressed replication forks. Required to restart stalled replication forks induced by abortive topoisomerase 1 and 2 lesions. May play a role in the repair of DNA that is damaged by ultraviolet light or other mutagens. This is ATP-dependent DNA helicase Q1 (RECQL) from Pongo abelii (Sumatran orangutan).